A 121-amino-acid polypeptide reads, in one-letter code: DNA-directed RNA polymerase subunit Rpo8 (121 aa).

This sequence belongs to the archaeal Rpo8 RNA polymerase subunit family. In terms of assembly, part of the 13-subunit RNA polymerase complex. This subunit is phosphorylated.

Its subcellular location is the cytoplasm. It catalyses the reaction RNA(n) + a ribonucleoside 5'-triphosphate = RNA(n+1) + diphosphate. Its function is as follows. DNA-dependent RNA polymerase (RNAP) catalyzes the transcription of DNA into RNA using the four ribonucleoside triphosphates as substrates. The chain is DNA-directed RNA polymerase subunit Rpo8 from Sulfolobus acidocaldarius (strain ATCC 33909 / DSM 639 / JCM 8929 / NBRC 15157 / NCIMB 11770).